The following is a 297-amino-acid chain: tRNA pseudouridine synthase B (297 aa).

The Nucleophile role is filled by aspartate 44.

Belongs to the pseudouridine synthase TruB family. Type 1 subfamily.

The catalysed reaction is uridine(55) in tRNA = pseudouridine(55) in tRNA. Its function is as follows. Responsible for synthesis of pseudouridine from uracil-55 in the psi GC loop of transfer RNAs. The chain is tRNA pseudouridine synthase B from Corynebacterium aurimucosum (strain ATCC 700975 / DSM 44827 / CIP 107346 / CN-1) (Corynebacterium nigricans).